A 211-amino-acid chain; its full sequence is Nucleoside diphosphate kinase homolog 5 (211 aa).

Positions 13-145 (EKTLALIKPD…EREIRFMFPA (133 aa)) are NDK.

This sequence belongs to the NDK family. In terms of assembly, component of the axonemal radial spoke complex 1 (RS1), at least composed of spoke head proteins RSPH1, RSPH3, RSPH9 and the cilia-specific component RSPH4A or sperm-specific component RSPH6A, spoke stalk proteins RSPH14, DNAJB13, DYDC1, ROPN1L and NME5, and the anchor protein IQUB. Interacts with IQUB. In terms of tissue distribution, expressed in the trachea, ependymal cells and oviduct (at protein level). Expressed predominantly in germ cells of the testis. Not expressed in testicular somatic cells.

It localises to the cell projection. It is found in the cilium. Its subcellular location is the cytoplasm. The protein localises to the cytoskeleton. The protein resides in the flagellum axoneme. In terms of biological role, functions as part of axonemal radial spoke complexes that play an important part in the motility of sperm and cilia. Does not seem to have nucleoside diphosphate kinase (NDPK) activity. Confers protection from cell death by BAX and alters the cellular levels of several antioxidant enzymes including GPX5. May play a role in spermiogenesis by increasing the ability of late-stage spermatids to eliminate reactive oxygen species. The polypeptide is Nucleoside diphosphate kinase homolog 5 (Nme5) (Mus musculus (Mouse)).